Consider the following 224-residue polypeptide: Orotidine 5'-phosphate decarboxylase (224 aa).

Substrate contacts are provided by residues Asp10, Lys32, 59 to 68 (DLKLHDIPNT), Thr115, Arg175, Gln184, Gly204, and Arg205. The active-site Proton donor is Lys61.

The protein belongs to the OMP decarboxylase family. Type 1 subfamily. In terms of assembly, homodimer.

It catalyses the reaction orotidine 5'-phosphate + H(+) = UMP + CO2. It participates in pyrimidine metabolism; UMP biosynthesis via de novo pathway; UMP from orotate: step 2/2. Its function is as follows. Catalyzes the decarboxylation of orotidine 5'-monophosphate (OMP) to uridine 5'-monophosphate (UMP). This chain is Orotidine 5'-phosphate decarboxylase, found in Novosphingobium aromaticivorans (strain ATCC 700278 / DSM 12444 / CCUG 56034 / CIP 105152 / NBRC 16084 / F199).